A 1589-amino-acid polypeptide reads, in one-letter code: Cell division control protein 25 (1589 aa).

Residues 1 to 14 are compositionally biased toward polar residues; it reads MSDTNTSIPNTSSA. 4 disordered regions span residues 1–53, 121–243, 359–424, and 553–574; these read MSDT…STSE, NFGR…MNTN, ANIE…SLSA, and TMND…GDDG. The span at 20–53 shows a compositional bias: low complexity; that stretch reads ASQTPSISSSSNTSTTTNTESSSASLSSSPSTSE. The region spanning 58–128 is the SH3 domain; that stretch reads RPIGIVVAAY…PQNFGRPLRD (71 aa). The segment covering 130-139 has biased composition (basic residues); sequence HLRKHSHPMK. Positions 143–158 are enriched in low complexity; sequence SSKSSRRSSLNSLGNS. Phosphoserine occurs at positions 151 and 154. 2 stretches are compositionally biased toward polar residues: residues 173-205 and 211-238; these read GSST…SPFS and SHIT…DGSS. Positions 359 to 375 are enriched in basic and acidic residues; the sequence is ANIEDSSTRSKQSESEQ. The span at 415–424 shows a compositional bias: polar residues; it reads GPSSLNSLSA. S423 is modified (phosphoserine). 3 positions are modified to phosphoserine: S580, S596, and S632. The residue at position 635 (T635) is a Phosphothreonine. S649 is modified (phosphoserine). The region spanning 1117 to 1247 is the N-terminal Ras-GEF domain; the sequence is SRGKIRGGTK…LLQKINEKLI (131 aa). Residues 1249 to 1259 are compositionally biased toward basic and acidic residues; the sequence is ENEKEPVDPKQ. Residues 1249 to 1287 form a disordered region; that stretch reads ENEKEPVDPKQQDSVSAVVQTTKRDNKSPIHMSSSSLPS. A compositionally biased stretch (polar residues) spans 1260–1269; sequence QDSVSAVVQT. In terms of domain architecture, Ras-GEF spans 1305-1542; the sequence is DPYTYATQLT…YQLSLQVEPR (238 aa). A helical transmembrane segment spans residues 1452–1473; that stretch reads DVACVPFFGVYLSDLTFTFVGN. The disordered stretch occupies residues 1570–1589; it reads DKNGNFLKLGKKKPPSRLFR. Residues 1578-1589 show a composition bias toward basic residues; that stretch reads LGKKKPPSRLFR.

Its subcellular location is the membrane. Functionally, promotes the exchange of Ras-bound GDP by GTP. This protein positively controls the level of cellular cAMP at start, the stage at which the yeast cell division cycle is triggered. This chain is Cell division control protein 25 (CDC25), found in Saccharomyces cerevisiae (strain ATCC 204508 / S288c) (Baker's yeast).